Consider the following 159-residue polypeptide: uncharacterized protein (159 aa).

A signal peptide spans 1–20 (MKKIIAMSLLMFSVVMSVNA).

This is an uncharacterized protein from Pasteurella multocida (strain Pm70).